The primary structure comprises 79 residues: uncharacterized protein (79 aa).

Positions 1 to 20 (MSQLMGIITRLQSLQETAEA) are cleaved as a signal peptide.

This is an uncharacterized protein from Bacillus subtilis (strain 168).